The chain runs to 411 residues: MTSTLPYLTSPPATHPSNSDHKKLRSACDSCHQCKVKCSGGSPCFRCTSKGLNCRYGYQNRAGKPKGSKNRKTLEREHQLRMEWLTSQLRDANGGLGNLNIDLSDPTTLLPSPFFQSTRWKQGHMLPQSSVQPTPANQCIKSTEHESECLPTPQGLDTWTMDLGPIAQTPRESTSESLEAFTTPISFTGGGETYLRQLSDPTTPISFGFPSPHARLDGTGDPCACVQTQAVNISTLHQLTCRDRSDRFDLAMKSITSTLETCEKFVVCEACDKSVASILLTLSAIELIFTLFEQLTMNNRRLSPPEEEQRLIPCSLGDYKVTKEESQAIRNVLVKMTLSKGKQALNALQNLVNGSVDFLDESGPCEASQHDSNNANEPMLSGLSVTDRNYMTQCISRKNAALEVLMAAVAV.

Over residues 1-17 (MTSTLPYLTSPPATHPS) the composition is skewed to polar residues. The tract at residues 1–21 (MTSTLPYLTSPPATHPSNSDH) is disordered. A DNA-binding region (zn(2)-C6 fungal-type) is located at residues 28 to 54 (CDSCHQCKVKCSGGSPCFRCTSKGLNC).

It localises to the nucleus. Transcription factor; part of the gene cluster that mediates the biosynthesis of hexadehydro-astechrome (HAS), a tryptophan-derived iron(III)-complex that acts as a virulence factor in infected mice. Positively regulates the expression of the HAS biosynthetic genes. The protein is C6 finger domain transcription factor hasA of Aspergillus fumigatus (strain CBS 144.89 / FGSC A1163 / CEA10) (Neosartorya fumigata).